The chain runs to 352 residues: N-terminal EF-hand calcium-binding protein 1 (352 aa).

Serine 4 bears the Phosphoserine mark. EF-hand domains lie at 26 to 61 and 60 to 95; these read KGMS…GVLS and LSGE…HLGE. Ca(2+) is bound by residues aspartate 39, asparagine 41, aspartate 43, lysine 45, and glutamate 50. A coiled-coil region spans residues 135–163; sequence LLKETLNQLQSLQNSLECAMETTEEQTRQ. The interval 155-202 is disordered; that stretch reads ETTEEQTRQERQGPSKPEVLSIQWPGKRSSRRVQRHNSFSPNSPQFNV. Residues 190–202 show a composition bias toward polar residues; it reads HNSFSPNSPQFNV. Phosphoserine occurs at positions 192 and 197. Positions 209–275 form a coiled coil; it reads EEDNQWMTQI…EEFQLALKHY (67 aa). The 89-residue stretch at 252-340 folds into the ABM domain; sequence MLVQRQMSVT…LETPELTSTM (89 aa).

As to quaternary structure, interacts with STX1. May interact with CPNE6. As to expression, expressed in brain (at protein level). Expressed in the cerebral cortex only in layer 4, thalamic nuclei (the mediodorsal nucleus), hippocampus (a small band of pyramidal neurons at the boundary between CA1 and CA3), interneurons interspersed throughout the hippocampus proper, interneurons in the hilus, bodies of the neurons but also their dendritic projections (at protein level).

It localises to the cytoplasm. This is N-terminal EF-hand calcium-binding protein 1 (Necab1) from Mus musculus (Mouse).